The primary structure comprises 337 residues: 1-aminocyclopropane-1-carboxylate deaminase (337 aa).

Lysine 50 is modified (N6-(pyridoxal phosphate)lysine). The active-site Nucleophile is serine 77.

It belongs to the ACC deaminase/D-cysteine desulfhydrase family. Homotrimer. The cofactor is pyridoxal 5'-phosphate.

It catalyses the reaction 1-aminocyclopropane-1-carboxylate + H2O = 2-oxobutanoate + NH4(+). Catalyzes a cyclopropane ring-opening reaction, the irreversible conversion of 1-aminocyclopropane-1-carboxylate (ACC) to ammonia and alpha-ketobutyrate. Allows growth on ACC as a nitrogen source. This Rhizobium rhizogenes (strain K84 / ATCC BAA-868) (Agrobacterium radiobacter) protein is 1-aminocyclopropane-1-carboxylate deaminase.